The following is a 368-amino-acid chain: SH3 domain-containing protein 2 (368 aa).

2 coiled-coil regions span residues M1–A21 and L146–E210. In terms of domain architecture, BAR spans M1–A264. A disordered region spans residues E258–E281. The SH3 domain maps to M299 to R358.

In terms of assembly, homodimer. Interacts with FREE1. Interacts (via SH3 domain) with ATG8E and ATG8F. Component of a phosphoinositide 3-kinase (PI3K) complex containing ATG6, SH3P2 and FREE1. Binds to SH3P3 and DRP1A. Forms a complex made of SH3P2 and DRP1A and triggers its accumulation at the cell plate. In terms of tissue distribution, highly expressed in seedlings. Detected in flowers, leaves and stems.

The protein resides in the cytoplasm. Its subcellular location is the cytoplasmic vesicle. It is found in the clathrin-coated vesicle. It localises to the cell membrane. The protein localises to the late endosome. The protein resides in the autophagosome membrane. Functionally, regulator for autophaosome formation and/or maturation. Binds phosphatidylinositol-phosphate; highest affinity for vesicles containing PtdIns(3,4,5)P(3), followed by those containing PtdIns(4,5)P(2) and PtdIns(3,4)P(2), with minimal binding to phosphatidylinositol monophosphates, including PtdIns(3)P. Together with DRP1A, converts the fused vesicles to tubular structures at the cell plate during cytokinesis. This Arabidopsis thaliana (Mouse-ear cress) protein is SH3 domain-containing protein 2.